The following is a 451-amino-acid chain: Phosphoglucosamine mutase (451 aa).

Residue Ser104 is the Phosphoserine intermediate of the active site. Mg(2+)-binding residues include Ser104, Asp249, Asp251, and Asp253. Ser104 bears the Phosphoserine mark.

The protein belongs to the phosphohexose mutase family. Requires Mg(2+) as cofactor. Post-translationally, activated by phosphorylation.

It carries out the reaction alpha-D-glucosamine 1-phosphate = D-glucosamine 6-phosphate. In terms of biological role, catalyzes the conversion of glucosamine-6-phosphate to glucosamine-1-phosphate. In Psychrobacter sp. (strain PRwf-1), this protein is Phosphoglucosamine mutase.